A 1737-amino-acid polypeptide reads, in one-letter code: Complement C4 (1737 aa).

A signal peptide spans Met1–Gln19. An intrachain disulfide couples Cys66 to Cys95. Residues Asn224 and Asn664 are each glycosylated (N-linked (GlcNAc...) asparagine). A disulfide bond links Cys633 and Cys667. A propeptide spanning residues Arg674–Arg677 is cleaved from the precursor. 3 disulfide bridges follow: Cys700/Cys726, Cys701/Cys733, and Cys714/Cys734. The 35-residue stretch at Cys700–Cys734 folds into the Anaphylatoxin-like domain. Asn743 is a glycosylation site (N-linked (GlcNAc...) asparagine). A cross-link (isoglutamyl cysteine thioester (Cys-Gln)) is located at residues Cys1005 to Gln1008. 2 N-linked (GlcNAc...) asparagine glycosylation sites follow: Asn1323 and Asn1386. Residues Tyr1412, Tyr1414, and Tyr1416 each carry the sulfotyrosine modification. A propeptide spanning residues Arg1443–Arg1446 is cleaved from the precursor. Intrachain disulfides connect Cys1464-Cys1528, Cys1576-Cys1581, Cys1588-Cys1666, Cys1611-Cys1735, and Cys1711-Cys1720. Residues Cys1588–Cys1735 enclose the NTR domain. Tyr1676 is modified (sulfotyrosine).

In terms of assembly, in absence of complement activation, circulates in blood as a disulfide-linked trimer of an alpha, beta and gamma chain. As to quaternary structure, complement C4b is composed of complement C4b-A, complement C4 beta and complement C4 gamma chains that are associated via disulfide bonds. Non-enzymatic component of the C3 convertase, also named C4bC2b, composed of the serine protease complement C2b (C2), as well as complement C4b. Non-enzymatic component of the C5 convertase, also named C4bC2bC3b, composed of the serine protease complement C2b (C2), complement C3b, as well as complement C4b. Post-translationally, prior to secretion, the single-chain precursor is enzymatically cleaved by plasminogen (PLG) to yield non-identical chains alpha, beta and gamma. During activation of the complement systems, the alpha chain is cleaved into C4a and C4b by different proteases depending on the complement pathway: C4b stays linked to the beta and gamma chains, while C4a is released in the plasma. The alpha chain is cleaved by C1S to generate C4a and C4b following activation by the classical complement system. The alpha chain is cleaved to generate C4a and C4b by MASP2 following activation by the lectin complement system. The alpha chain is cleaved by GZMK to generate C4a and C4b following activation by the GZMK complement system. Further degradation of C4b by C1 into the inactive fragments C4c and C4d blocks the generation of C3 convertase. The proteolytic cleavages often are incomplete so that many structural forms can be found in plasma. In terms of processing, upon activation, the internal thioester bond reacts with carbohydrate antigens on the target surface to form amide or ester bonds, leading to covalent association with the surface of pathogens. Complement C4b interacts with complement C3b via a thioester linkage. Post-translationally, N- and O-glycosylated. O-glycosylated with a core 1 or possibly core 8 glycan.

The protein localises to the secreted. It localises to the cell surface. Functionally, precursor of non-enzymatic components of the classical, lectin and GZMK complement pathways, which consist in a cascade of proteins that leads to phagocytosis and breakdown of pathogens and signaling that strengthens the adaptive immune system. Its function is as follows. Non-enzymatic component of C3 and C5 convertases. Generated following cleavage by complement proteases (C1S, MASP2 or GZMK, depending on the complement pathway), it covalently attaches to the surface of pathogens, where it acts as an opsonin that marks the surface of antigens for removal. It then recruits the serine protease complement C2b to form the C3 and C5 convertases, which cleave and activate C3 and C5, respectively, the next components of the complement pathways. Complement C4b-A isotype is responsible for effective binding to form amide bonds with immune aggregates or protein antigens, while complement C4b-B isotype catalyzes the transacylation of the thioester carbonyl group to form ester bonds with carbohydrate antigens. Putative humoral mediator released following cleavage by complement proteases (C1S, MASP2 or GZMK, depending on the complement pathway). While it is strongly similar to anaphylatoxins, its role is unclear. Was reported to act as a mediator of local inflammatory process; however these effects were probably due to contamination with C3a and/C5a anaphylatoxins in biological assays. The polypeptide is Complement C4 (Rattus norvegicus (Rat)).